The sequence spans 61 residues: Small ribosomal subunit protein uS14B (61 aa).

The Zn(2+) site is built by C24, C27, C40, and C43.

The protein belongs to the universal ribosomal protein uS14 family. Zinc-binding uS14 subfamily. In terms of assembly, part of the 30S ribosomal subunit. Contacts proteins S3 and S10. It depends on Zn(2+) as a cofactor.

In terms of biological role, binds 16S rRNA, required for the assembly of 30S particles and may also be responsible for determining the conformation of the 16S rRNA at the A site. The protein is Small ribosomal subunit protein uS14B of Streptococcus pyogenes serotype M6 (strain ATCC BAA-946 / MGAS10394).